Consider the following 214-residue polypeptide: Probable transaldolase (214 aa).

Lys-83 serves as the catalytic Schiff-base intermediate with substrate.

The protein belongs to the transaldolase family. Type 3B subfamily.

Its subcellular location is the cytoplasm. The enzyme catalyses D-sedoheptulose 7-phosphate + D-glyceraldehyde 3-phosphate = D-erythrose 4-phosphate + beta-D-fructose 6-phosphate. The protein operates within carbohydrate degradation; pentose phosphate pathway; D-glyceraldehyde 3-phosphate and beta-D-fructose 6-phosphate from D-ribose 5-phosphate and D-xylulose 5-phosphate (non-oxidative stage): step 2/3. In terms of biological role, transaldolase is important for the balance of metabolites in the pentose-phosphate pathway. The polypeptide is Probable transaldolase (Desulfotalea psychrophila (strain LSv54 / DSM 12343)).